Here is a 127-residue protein sequence, read N- to C-terminus: Probable soluble cytochrome b562 1 (127 aa).

Residues 1–21 form the signal peptide; sequence MRKIPIIAGVFSLLITSCTFA. Residues Met-28 and His-123 each coordinate heme b.

This sequence belongs to the cytochrome b562 family. Heme b is required as a cofactor.

The protein localises to the periplasm. Electron-transport protein of unknown function. This chain is Probable soluble cytochrome b562 1 (cybC1), found in Yersinia pestis.